The sequence spans 397 residues: Elongation factor Tu (397 aa).

One can recognise a tr-type G domain in the interval 10–206 (KPHCNIGTIG…AVDTWIPDPQ (197 aa)). The segment at 19 to 26 (GHVDHGKT) is G1. 19–26 (GHVDHGKT) lines the GTP pocket. Thr26 contacts Mg(2+). The G2 stretch occupies residues 61–65 (GITIS). The interval 82–85 (DCPG) is G3. Residues 82–86 (DCPGH) and 137–140 (NKCD) contribute to the GTP site. Residues 137–140 (NKCD) form a G4 region. The segment at 175-177 (SAL) is G5.

It belongs to the TRAFAC class translation factor GTPase superfamily. Classic translation factor GTPase family. EF-Tu/EF-1A subfamily. Monomer.

It is found in the cytoplasm. It catalyses the reaction GTP + H2O = GDP + phosphate + H(+). GTP hydrolase that promotes the GTP-dependent binding of aminoacyl-tRNA to the A-site of ribosomes during protein biosynthesis. This is Elongation factor Tu from Lachnoclostridium phytofermentans (strain ATCC 700394 / DSM 18823 / ISDg) (Clostridium phytofermentans).